Consider the following 361-residue polypeptide: Phospho-N-acetylmuramoyl-pentapeptide-transferase (361 aa).

10 consecutive transmembrane segments (helical) span residues 28–48 (LAAL…IRSL), 73–93 (TMGG…WADL), 97–117 (YIWL…VDDY), 134–154 (FFWQ…TAEL), 168–188 (VAIP…IVGS), 200–220 (GLAI…AYVA), 237–257 (AGEL…FLWF), 264–284 (VFMG…ITVI), 289–309 (IVLV…MIQV), and 338–358 (QVVV…LSTL).

The protein belongs to the glycosyltransferase 4 family. MraY subfamily. Mg(2+) serves as cofactor.

It localises to the cell inner membrane. The catalysed reaction is UDP-N-acetyl-alpha-D-muramoyl-L-alanyl-gamma-D-glutamyl-meso-2,6-diaminopimeloyl-D-alanyl-D-alanine + di-trans,octa-cis-undecaprenyl phosphate = di-trans,octa-cis-undecaprenyl diphospho-N-acetyl-alpha-D-muramoyl-L-alanyl-D-glutamyl-meso-2,6-diaminopimeloyl-D-alanyl-D-alanine + UMP. It participates in cell wall biogenesis; peptidoglycan biosynthesis. In terms of biological role, catalyzes the initial step of the lipid cycle reactions in the biosynthesis of the cell wall peptidoglycan: transfers peptidoglycan precursor phospho-MurNAc-pentapeptide from UDP-MurNAc-pentapeptide onto the lipid carrier undecaprenyl phosphate, yielding undecaprenyl-pyrophosphoryl-MurNAc-pentapeptide, known as lipid I. In Nitrosomonas eutropha (strain DSM 101675 / C91 / Nm57), this protein is Phospho-N-acetylmuramoyl-pentapeptide-transferase.